The sequence spans 416 residues: UDP-N-acetylglucosamine 1-carboxyvinyltransferase (416 aa).

22 to 23 contributes to the phosphoenolpyruvate binding site; it reads KN. Residue Arg-92 coordinates UDP-N-acetyl-alpha-D-glucosamine. Cys-116 functions as the Proton donor in the catalytic mechanism. Cys-116 carries the post-translational modification 2-(S-cysteinyl)pyruvic acid O-phosphothioketal. Residues 121–125, Asp-304, and Ile-326 contribute to the UDP-N-acetyl-alpha-D-glucosamine site; that span reads RPVDQ.

Belongs to the EPSP synthase family. MurA subfamily.

The protein resides in the cytoplasm. The enzyme catalyses phosphoenolpyruvate + UDP-N-acetyl-alpha-D-glucosamine = UDP-N-acetyl-3-O-(1-carboxyvinyl)-alpha-D-glucosamine + phosphate. Its pathway is cell wall biogenesis; peptidoglycan biosynthesis. In terms of biological role, cell wall formation. Adds enolpyruvyl to UDP-N-acetylglucosamine. This Cupriavidus taiwanensis (strain DSM 17343 / BCRC 17206 / CCUG 44338 / CIP 107171 / LMG 19424 / R1) (Ralstonia taiwanensis (strain LMG 19424)) protein is UDP-N-acetylglucosamine 1-carboxyvinyltransferase.